Here is a 184-residue protein sequence, read N- to C-terminus: ATP-dependent protease subunit HslV (184 aa).

Residue Thr-12 is part of the active site. Na(+)-binding residues include Ala-166, Cys-169, and Thr-172.

This sequence belongs to the peptidase T1B family. HslV subfamily. As to quaternary structure, a double ring-shaped homohexamer of HslV is capped on each side by a ring-shaped HslU homohexamer. The assembly of the HslU/HslV complex is dependent on binding of ATP.

It is found in the cytoplasm. The catalysed reaction is ATP-dependent cleavage of peptide bonds with broad specificity.. With respect to regulation, allosterically activated by HslU binding. Functionally, protease subunit of a proteasome-like degradation complex believed to be a general protein degrading machinery. This Brucella abortus (strain S19) protein is ATP-dependent protease subunit HslV.